A 383-amino-acid polypeptide reads, in one-letter code: Sulfate adenylyltransferase (383 aa).

This sequence belongs to the sulfate adenylyltransferase family.

The catalysed reaction is sulfate + ATP + H(+) = adenosine 5'-phosphosulfate + diphosphate. Its pathway is sulfur metabolism; hydrogen sulfide biosynthesis; sulfite from sulfate: step 1/3. This is Sulfate adenylyltransferase from Halothermothrix orenii (strain H 168 / OCM 544 / DSM 9562).